Consider the following 540-residue polypeptide: Homoserine O-acetyltransferase (540 aa).

An AB hydrolase-1 domain is found at 66–404 (NVILICHALT…QHGHDAFLLE (339 aa)). Residue S171 is the Nucleophile of the active site. R240 lines the substrate pocket. The tract at residues 262 to 284 (QDTDKSGIKGTTGTEGKNSSEIS) is disordered. Residues D365 and H398 contribute to the active site. D399 contacts substrate. 2 consecutive CBS domains span residues 425-484 (MNRN…ELDE) and 486-540 (ITRD…GKYD).

This sequence belongs to the AB hydrolase superfamily. MetX family. As to quaternary structure, homodimer.

The protein resides in the cytoplasm. The enzyme catalyses L-homoserine + acetyl-CoA = O-acetyl-L-homoserine + CoA. The protein operates within amino-acid biosynthesis; L-methionine biosynthesis via de novo pathway; O-acetyl-L-homoserine from L-homoserine: step 1/1. Its function is as follows. Transfers an acetyl group from acetyl-CoA to L-homoserine, forming acetyl-L-homoserine. In vitro, can also use propionyl-CoA or butiryl-CoA as acyl donor. This is Homoserine O-acetyltransferase from Methanosarcina acetivorans (strain ATCC 35395 / DSM 2834 / JCM 12185 / C2A).